Consider the following 244-residue polypeptide: Claudin-12 (244 aa).

Residues 1–10 (MGCRDVHAAT) are Cytoplasmic-facing. The helical transmembrane segment at 11 to 31 (VLSFLCGIASVAGLFAGTLLP) threads the bilayer. Residues 32 to 87 (NWRKLRLITFNRNEKNLTVYTGLWVKCARYDGSSDCLMYDTTWYSSVDQLDLRVLQ) are Extracellular-facing. The chain crosses the membrane as a helical span at residues 88 to 108 (FALPLSMLIAMGALLLCLIGM). Residues 109 to 135 (CNTAFRSSVPNIKLAKCLVNSAGCHLV) lie on the Cytoplasmic side of the membrane. Residues 136 to 156 (AGLLFFLAGTVSLSPSIWVIF) traverse the membrane as a helical segment. Topologically, residues 157–174 (YNIHLNKKFEPVFSFDYA) are extracellular. The chain crosses the membrane as a helical span at residues 175-195 (VYVTIASAGGLFMTSLILFIW). Topologically, residues 196-244 (YCTCKSLPSPFWQPLYSHPPSMHTYSQPYSARSRLSAIEIDIPVVSHTT) are cytoplasmic. Phosphoserine occurs at positions 228 and 231.

It belongs to the claudin family. As to quaternary structure, interacts with OCLN.

Its subcellular location is the cell junction. The protein resides in the tight junction. The protein localises to the cell membrane. Its function is as follows. Plays a major role in tight junction-specific obliteration of the intercellular space, through calcium-independent cell-adhesion activity. The sequence is that of Claudin-12 (CLDN12) from Pongo abelii (Sumatran orangutan).